The following is a 481-amino-acid chain: MTFRFDNSYARELEGFYVDWQAAPVPAPRLLRLNRGLAGELGLDADRLEAEGAAIFSGKRLPEGAHPLAQAYAGHQFGGFSPQLGDGRALLIGEVTDRSGRRRDLQLKGSGRTPFSRGADGKATLGPVLREYLVGEAMHGLGIPTTRALAAVATGEPVLRQAGELPGAILTRVAASHIRVGTFQFFAARSDMERVRRLADYAIARHYPALAEAPEPYLAFYEAVADAQADLVARWMLVGFIHGVMNTDNMAISGETIDYGPCAFMEGFDPGTVFSSIDLQGRYAYGNQPFILAWNLARLGEALLPLFDADAGRAAEKANAVLGTVGARYQARWLEGMRAKLGLAGAEEGDLSLAEDLLAAMQGARADWTLTFRRLADAVTEDAALRPVLQGPDTLQSWLSRWRRRLGPEAARRIRAVNPIYIARNHRVEEALAAAHAGDLGPFDRLIGALSDPFTERAGLEDLAQPAPAGFNEGYRTFCGT.

Positions 85, 87, 88, 108, 120, 121, 172, and 179 each coordinate ATP. Aspartate 248 functions as the Proton acceptor in the catalytic mechanism. Residues asparagine 249 and aspartate 258 each coordinate Mg(2+). Aspartate 258 serves as a coordination point for ATP.

The protein belongs to the SELO family. Requires Mg(2+) as cofactor. It depends on Mn(2+) as a cofactor.

The enzyme catalyses L-seryl-[protein] + ATP = 3-O-(5'-adenylyl)-L-seryl-[protein] + diphosphate. It carries out the reaction L-threonyl-[protein] + ATP = 3-O-(5'-adenylyl)-L-threonyl-[protein] + diphosphate. The catalysed reaction is L-tyrosyl-[protein] + ATP = O-(5'-adenylyl)-L-tyrosyl-[protein] + diphosphate. It catalyses the reaction L-histidyl-[protein] + UTP = N(tele)-(5'-uridylyl)-L-histidyl-[protein] + diphosphate. The enzyme catalyses L-seryl-[protein] + UTP = O-(5'-uridylyl)-L-seryl-[protein] + diphosphate. It carries out the reaction L-tyrosyl-[protein] + UTP = O-(5'-uridylyl)-L-tyrosyl-[protein] + diphosphate. In terms of biological role, nucleotidyltransferase involved in the post-translational modification of proteins. It can catalyze the addition of adenosine monophosphate (AMP) or uridine monophosphate (UMP) to a protein, resulting in modifications known as AMPylation and UMPylation. This Cereibacter sphaeroides (strain ATCC 17025 / ATH 2.4.3) (Rhodobacter sphaeroides) protein is Protein nucleotidyltransferase YdiU.